The primary structure comprises 374 residues: Phosphate-binding protein PstS 1 (374 aa).

The N-terminal stretch at 1–23 (MKIRLHTLLAVLTAAPLLLAAAG) is a signal peptide. C24 carries N-palmitoyl cysteine lipidation. C24 is lipidated: S-diacylglycerol cysteine. The tract at residues 25 to 48 (GSKPPSGSPETGAGAGTVATTPAS) is disordered. Phosphate contacts are provided by residues 58 to 60 (STL), S88, D106, and 189 to 191 (SGD).

Belongs to the PstS family. The complex is composed of two ATP-binding proteins (PstB), two transmembrane proteins (PstC and PstA) and a solute-binding protein (PstS).

It localises to the cell membrane. Part of the ABC transporter complex PstSACB involved in phosphate import. The polypeptide is Phosphate-binding protein PstS 1 (pstS1) (Mycobacterium tuberculosis (strain CDC 1551 / Oshkosh)).